Consider the following 548-residue polypeptide: uncharacterized protein (548 aa).

A DhaL domain is found at 8-200; the sequence is KLFADMIIQG…LLCVYEGFLK (193 aa).

This is an uncharacterized protein from Staphylococcus aureus (strain NCTC 8325 / PS 47).